Here is a 363-residue protein sequence, read N- to C-terminus: Electron transfer flavoprotein subunit alpha, mitochondrial (363 aa).

The transit peptide at 1 to 24 directs the protein to the mitochondrion; sequence MTRTVLLRALTKNKFVASNAPRSI. Position 303 to 331 (303 to 331) interacts with FAD; sequence LYMAFGVSGAIQHLAGIKDSKVIVAVNKD.

It belongs to the ETF alpha-subunit/FixB family. In terms of assembly, heterodimer of an alpha and a beta subunit. FAD is required as a cofactor.

The protein localises to the mitochondrion matrix. In terms of biological role, the electron transfer flavoprotein serves as a specific electron acceptor for several dehydrogenases, including five acyl-CoA dehydrogenases, glutaryl-CoA and sarcosine dehydrogenase. It transfers the electrons to the main mitochondrial respiratory chain via ETF-ubiquinone oxidoreductase (ETF dehydrogenase). Involved in leucine catabolism and in phytol degradation. The polypeptide is Electron transfer flavoprotein subunit alpha, mitochondrial (ETFA) (Arabidopsis thaliana (Mouse-ear cress)).